A 361-amino-acid chain; its full sequence is Putative F-box protein At3g18340 (361 aa).

Positions 1 to 46 (MASGKLPWELEEEILCRLPPGSLVRLRSVCKHWNDLYNDKWFIKKS) constitute an F-box domain.

The chain is Putative F-box protein At3g18340 from Arabidopsis thaliana (Mouse-ear cress).